Consider the following 468-residue polypeptide: MSSHKPVRPNEALHKEALEELDAKINEAKKRFNEHKEKLGAIRGGGSLQEKNAELRAELDNIRNAQAAIRSSKQTLINKVKAQDELLKKKVKELTAMKKTVPFKSEVELDKHVKQLQAAVDSGTLKIVDEKKYLREISQCNRTRKSFVELNALQTSIDTIRNELNELRDQLNDSESKKLSDKFVEIRSELDEVRKQQDGYYKDQRKLIAERDDEKTALDDLYNQRRALQREYDTQLRAFRTYEREQRAKRQEQFRLERENREKEKRRIAAQRKLEEASIPAFTEEILACENLLKVFHVPVESSTTNAVSTGNTSSKILKPRTLTPRTVDPIPEGTIIKKESSDDAMFSGLKKSKPKKSNKSNNNQADSDRLNLSFGTIKEFDFVGVPAPFTKSQVDSAVEQLKSRIAHFKEQQDSVTKQRIEKAKQEIEKLEAKYNSKEEKTLTEADMVISSEETVTVTNDLEVEATA.

Coiled coils occupy residues 10–94 (NEAL…VKEL) and 147–279 (FVEL…EASI). Residues 324-369 (TPRTVDPIPEGTIIKKESSDDAMFSGLKKSKPKKSNKSNNNQADSD) form a disordered region. Phosphoserine is present on serine 342. Residues 399–445 (VEQLKSRIAHFKEQQDSVTKQRIEKAKQEIEKLEAKYNSKEEKTLTE) adopt a coiled-coil conformation.

The protein localises to the cytoplasm. This is an uncharacterized protein from Schizosaccharomyces pombe (strain 972 / ATCC 24843) (Fission yeast).